Reading from the N-terminus, the 360-residue chain is Peptide chain release factor 1 (360 aa).

At Gln235 the chain carries N5-methylglutamine.

This sequence belongs to the prokaryotic/mitochondrial release factor family. Methylated by PrmC. Methylation increases the termination efficiency of RF1.

It localises to the cytoplasm. Peptide chain release factor 1 directs the termination of translation in response to the peptide chain termination codons UAG and UAA. The protein is Peptide chain release factor 1 of Blochmanniella pennsylvanica (strain BPEN).